The following is a 376-amino-acid chain: Actin, macronuclear (376 aa).

It belongs to the actin family.

It localises to the cytoplasm. Its subcellular location is the cytoskeleton. It catalyses the reaction ATP + H2O = ADP + phosphate + H(+). In terms of biological role, actins are highly conserved proteins that are involved in various types of cell motility and are ubiquitously expressed in all eukaryotic cells. This chain is Actin, macronuclear, found in Tetrahymena thermophila.